The following is a 146-amino-acid chain: 3-dehydroquinate dehydratase (146 aa).

Tyr23 functions as the Proton acceptor in the catalytic mechanism. The substrate site is built by Asn75, His81, and Asp88. His101 functions as the Proton donor in the catalytic mechanism. Substrate is bound by residues 102–103 and Arg112; that span reads LS.

The protein belongs to the type-II 3-dehydroquinase family. In terms of assembly, homododecamer.

The enzyme catalyses 3-dehydroquinate = 3-dehydroshikimate + H2O. It functions in the pathway metabolic intermediate biosynthesis; chorismate biosynthesis; chorismate from D-erythrose 4-phosphate and phosphoenolpyruvate: step 3/7. In terms of biological role, catalyzes a trans-dehydration via an enolate intermediate. The protein is 3-dehydroquinate dehydratase of Saccharophagus degradans (strain 2-40 / ATCC 43961 / DSM 17024).